Consider the following 180-residue polypeptide: Large ribosomal subunit protein uL10 (180 aa).

The disordered stretch occupies residues 161 to 180; sequence SKAEGSEETESNETTETVEE. Residues 166 to 180 are compositionally biased toward acidic residues; it reads SEETESNETTETVEE.

It belongs to the universal ribosomal protein uL10 family. As to quaternary structure, part of the ribosomal stalk of the 50S ribosomal subunit. The N-terminus interacts with L11 and the large rRNA to form the base of the stalk. The C-terminus forms an elongated spine to which L12 dimers bind in a sequential fashion forming a multimeric L10(L12)X complex.

Forms part of the ribosomal stalk, playing a central role in the interaction of the ribosome with GTP-bound translation factors. This Finegoldia magna (strain ATCC 29328 / DSM 20472 / WAL 2508) (Peptostreptococcus magnus) protein is Large ribosomal subunit protein uL10.